The sequence spans 371 residues: Aromatic peroxygenase (371 aa).

The first 18 residues, 1-18 (MKYFPLFPTLVFAARVVA), serve as a signal peptide directing secretion. A propeptide spanning residues 19 to 43 (FPAYASLAGLSQQELDAIIPTLEAR) is cleaved from the precursor. N54 carries an N-linked (GlcNAc...) asparagine glycan. A heme-binding site is contributed by C79. N184, N204, N225, and N329 each carry an N-linked (GlcNAc...) asparagine glycan. A disulfide bond links C321 and C362.

It belongs to the chloroperoxidase family. Heme b is required as a cofactor. In terms of processing, N-glycosylated.

It catalyses the reaction RH + H2O2 = ROH + H2O.. Its function is as follows. Aromatic peroxidase that oxidizes aryl alcohols into the corresponding aldehydes and then into the corresponding benzoic acids. Oxidizes toluene and naphthalene. Catalyzes the regioselective peroxide-dependent hydroxylation of propranolol and diclofenac to 5-hydroxypropranolol and 4'-hydroxydiclofenac. Catalyzes the regioselective peroxide-dependent hydroxylation of naphthalene to 1-naphthol or 2-naphthol via a naphthalene 1,2-oxide intermediate. Catalyzes the regioselective peroxide-dependent oxidation of pyridine to pyridine N-oxide. Halogenates monochlorodimedone and phenol. Oxidizes the sulfur-containing heterocycle dibenzothiophene to yield ring-hydroxylation products and to a lesser extent sulfoxidation products. The chain is Aromatic peroxygenase from Cyclocybe aegerita (Black poplar mushroom).